The following is a 93-amino-acid chain: Protein NONRESPONDING TO OXYLIPINS 2, mitochondrial (93 aa).

The N-terminal 27 residues, 1–27 (MASRCRSLSKPAFSAFRSAMNKPSIRP), are a transit peptide targeting the mitochondrion.

In terms of tissue distribution, expressed in cotyledons, roots and flowers.

It localises to the mitochondrion. Essential for mitochondrial morphology, functionality and distribution. Contributes to 9-lipoxygenase (9-LOX)-derived oxylipin synthesis, but not to brassinosteroids (BRs) signaling. Required for waving-inducing oxylipin 9-hydroxyoctadecatrienoic acid and derivatives (e.g. 9-HOT, 2-HOE, 13-HOT, 13-HOD, 13-KOD, 12,13-KHOD, 9-HOT, 9-HOD, 9-KOT, 9-KOD and 9,10-KHOE)-mediated root development regulation, including callose deposition, root waving and lateral roots formation. Involved in basal plant defense toward pathogenic bacteria (e.g. Pseudomonas syringae pv tomato), both in compatible (e.g. Pst DC3000) and incompatible (e.g. Pst DC3000 avrRPM1) interactions, as well as against obligate biotrophic pathogenic fungi (e.g. Golovinomyces cichoracearum), probably via the promotion of callose deposition in the cell wall. Confers sensitivity to the herbicide isoxaben, a herbicide inhibiting cellulose synthesis and altering the cell wall. This is Protein NONRESPONDING TO OXYLIPINS 2, mitochondrial from Arabidopsis thaliana (Mouse-ear cress).